The primary structure comprises 398 residues: Phosphoglycerate kinase (398 aa).

Residues 23-25, R38, 61-64, R122, and R155 each bind substrate; these read DFN and HMGK. Residues K206, G297, E328, and 354–357 contribute to the ATP site; that span reads GGDS.

Belongs to the phosphoglycerate kinase family. In terms of assembly, monomer.

The protein localises to the cytoplasm. The enzyme catalyses (2R)-3-phosphoglycerate + ATP = (2R)-3-phospho-glyceroyl phosphate + ADP. It functions in the pathway carbohydrate degradation; glycolysis; pyruvate from D-glyceraldehyde 3-phosphate: step 2/5. The chain is Phosphoglycerate kinase from Clostridium botulinum (strain Kyoto / Type A2).